The following is a 142-amino-acid chain: uncharacterized protein (142 aa).

This is an uncharacterized protein from Gallid herpesvirus 2 (strain GA) (GaHV-2).